Reading from the N-terminus, the 635-residue chain is Frizzled and smoothened-like protein C (635 aa).

The N-terminal stretch at 1–20 (MKFKLIIFIIIIYIIKILKS) is a signal peptide. At 21 to 244 (EILNEFGYGL…NKWVQMYKMS (224 aa)) the chain is on the extracellular side. The 135-residue stretch at 32 to 166 (DENLKCLSFI…LTKYGYTENN (135 aa)) folds into the FZ domain. Disulfide bonds link Cys37-Cys108 and Cys50-Cys101. 5 N-linked (GlcNAc...) asparagine glycosylation sites follow: Asn65, Asn141, Asn156, Asn185, and Asn203. A helical membrane pass occupies residues 245–265 (IVLSTLSFICSIYNIITFGLL). Over 266-275 (SKLKSKYNLC) the chain is Cytoplasmic. A helical membrane pass occupies residues 276–296 (ITFFSVSTVLMSLMDIVTYGI). Over 297–314 (GYEELLCPESGRYAIQSD) the chain is Extracellular. A helical membrane pass occupies residues 315-335 (VACGVTGAFFHIGITTGVLWW). At 336–356 (TTMSICLYSEVKRFKMISFRY) the chain is on the cytoplasmic side. Residues 357–377 (IIIFNSVISLILLIIPLSGQA) traverse the membrane as a helical segment. Over 378–398 (FMSGNGSLGCWIRKTWYANGT) the chain is Extracellular. Asn382 and Asn396 each carry an N-linked (GlcNAc...) asparagine glycan. A helical membrane pass occupies residues 399 to 419 (FWIPCGISLFIGAICIVLVIY). Residues 420-440 (EIFKISRNLSKDNKPLMFQIR) lie on the Cytoplasmic side of the membrane. Residues 441–461 (PFLCVLLVGGSFLYLFIFYFN) traverse the membrane as a helical segment. Residues 462-496 (NERNLDKYKAAIPSYVQCLLSSDENGEDCLTDGPG) lie on the Extracellular side of the membrane. The chain crosses the membrane as a helical span at residues 497–517 (FGAYFTFYFFTRLFGITSFSI). At 518–635 (YGTSKIARDI…SSKDSNTNSF (118 aa)) the chain is on the cytoplasmic side. The segment covering 559 to 594 (SISGSNQKRFNRNGSNFNMKQNKSNPNDSISLSVVE) has biased composition (polar residues). The interval 559-635 (SISGSNQKRF…SSKDSNTNSF (77 aa)) is disordered. A coiled-coil region spans residues 594 to 623 (ESTKKQDTENELESNIETKENRSTDISIEN). Residues 623–635 (NTTSSKDSNTNSF) show a composition bias toward low complexity.

Belongs to the G-protein coupled receptor Fz/Smo family.

The protein localises to the membrane. The protein is Frizzled and smoothened-like protein C (fslC) of Dictyostelium discoideum (Social amoeba).